Here is a 128-residue protein sequence, read N- to C-terminus: Glycine cleavage system H protein (128 aa).

In terms of domain architecture, Lipoyl-binding spans 24–106 (VYSVGITEHA…YTDGWLFSIK (83 aa)). N6-lipoyllysine is present on K65.

This sequence belongs to the GcvH family. The glycine cleavage system is composed of four proteins: P, T, L and H. (R)-lipoate serves as cofactor.

Functionally, the glycine cleavage system catalyzes the degradation of glycine. The H protein shuttles the methylamine group of glycine from the P protein to the T protein. This chain is Glycine cleavage system H protein, found in Yersinia pseudotuberculosis serotype O:1b (strain IP 31758).